Here is a 430-residue protein sequence, read N- to C-terminus: L-lysine N6-monooxygenase MbtG (430 aa).

The signal sequence occupies residues 1–21 (MTATLAVIGAGPKAVAVAAKA).

Belongs to the lysine N(6)-hydroxylase/L-ornithine N(5)-oxygenase family. It depends on FAD as a cofactor.

The catalysed reaction is L-lysine + NADPH + O2 = N(6)-hydroxy-L-lysine + NADP(+) + H2O. It participates in siderophore biosynthesis; mycobactin biosynthesis. Functionally, flavoprotein monooxygenase required for N-hydroxylation of the two acylated lysine residues during mycobactin assembly, thus producing the hydroxamate groups necessary for iron sequestration. Is also able, but less efficiently, to hydroxylate L-lysine (non acylated) in vitro. This chain is L-lysine N6-monooxygenase MbtG (mbtG), found in Mycobacterium sp. (strain MCS).